Reading from the N-terminus, the 1063-residue chain is Structural polyprotein (1063 aa).

The disordered stretch occupies residues 1-131 (MASTTPITME…LGPPTNPFQA (131 aa)). Positions 30–69 (GASQSRRPRPPRQRDSSTSGDDSGRDSGGPRRRRGNRGRG) are human C1QBP/SF2P32-binding. Residue serine 46 is modified to Phosphoserine; by host. Residues 59-69 (PRRRRGNRGRG) show a composition bias toward basic residues. The segment covering 93-107 (APKPSRAPPQQPQPP) has biased composition (pro residues). A disulfide bridge links cysteine 153 with cysteine 197. Positions 279 to 300 (GAPQAFLAGLLLAAVAVGTARA) are functions as E2 signal peptide. Over 301–534 (GLQPRADMAA…LWLATANALS (234 aa)) the chain is Extracellular. The interval 305–347 (RADMAAPPAPPQPPCAHGQHYGHHHHQLPFLGHDGHHGGTLRV) is disordered. Asparagine 353, asparagine 371, asparagine 410, and asparagine 429 each carry an N-linked (GlcNAc...) asparagine; by host glycan. The helical transmembrane segment at 535–555 (LDHALAAFVLLFPWVLIFMVC) threads the bilayer. Over 556 to 582 (RRACRRRGAAAALTAVVLQGYNPPAYG) the chain is Cytoplasmic. Positions 563 to 582 (GAAAALTAVVLQGYNPPAYG) are functions as E1 signal peptide. Topologically, residues 583 to 1028 (EEAFTYLCTA…QTWAEWAAAH (446 aa)) are extracellular. Disulfide bonds link cysteine 590/cysteine 595, cysteine 619/cysteine 824, cysteine 641/cysteine 653, cysteine 699/cysteine 712, cysteine 758/cysteine 767, cysteine 807/cysteine 817, cysteine 931/cysteine 934, and cysteine 950/cysteine 983. N-linked (GlcNAc...) asparagine; by host glycosylation occurs at asparagine 658. Positions 670 and 671 each coordinate Ca(2+). Ca(2+)-binding residues include aspartate 718 and threonine 719. N-linked (GlcNAc...) asparagine; by host glycans are attached at residues asparagine 759 and asparagine 791. O-linked (GalNAc...) threonine; by host glycans are attached at residues threonine 1011 and threonine 1012. Residues 1029–1049 (WWQLTLGAVCALLLAGLLACC) form a helical membrane-spanning segment. Over 1050–1063 (AKCLYYLRGAIAPR) the chain is Extracellular.

In terms of assembly, homodimer; further assembles into homooligomer. Interacts with human C1QBP. Interacts (via N-terminus) with protease/methyltransferase p150. Heterodimer with spike glycoprotein E2. As to quaternary structure, heterodimer with spike glycoprotein E1. Post-translationally, structural polyprotein: Specific enzymatic cleavages in vivo yield mature proteins. Two signal peptidase-mediated cleavages within the polyprotein produce the structural proteins capsid, E2, and E1. The E2 signal peptide remains attached to the C-terminus of the capsid protein after cleavage by the signal peptidase. Another signal peptide at E2 C-terminus directs E1 to the ER, with a similar mechanism. Contains three N-linked oligosaccharides. In terms of processing, capsid is phosphorylated on Ser-46 by host. This phosphorylation negatively regulates capsid protein RNA-binding activity. Dephosphorylated by human PP1A.

Its subcellular location is the virion. It localises to the host cytoplasm. The protein resides in the host mitochondrion. The protein localises to the virion membrane. It is found in the host Golgi apparatus membrane. Its function is as follows. Capsid protein interacts with genomic RNA and assembles into icosahedric core particles 65-70 nm in diameter. The resulting nucleocapsid eventually associates with the cytoplasmic domain of E2 at the cell membrane, leading to budding and formation of mature virions from host Golgi membranes. Phosphorylation negatively regulates RNA-binding activity, possibly delaying virion assembly during the viral replication phase. Capsid protein dimerizes and becomes disulfide-linked in the virion. Modulates genomic RNA replication. Modulates subgenomic RNA synthesis by interacting with human C1QBP/SF2P32. Induces both perinuclear clustering of mitochondria and the formation of electron-dense intermitochondrial plaques, both hallmarks of rubella virus infected cells. Induces apoptosis when expressed in transfected cells. Responsible for viral attachment to target host cell, by binding to the cell receptor. Its transport to the plasma membrane depends on interaction with E1 protein. The surface glycoproteins display an irregular helical organization and a pseudo-tetrameric inner nucleocapsid arrangement. In terms of biological role, class II viral fusion protein. Fusion activity is inactive as long as E1 is bound to E2 in mature virion. After virus attachment to target cell and clathrin-mediated endocytosis, acidification of the endosome would induce dissociation of E1/E2 heterodimer and concomitant trimerization of the E1 subunits. This E1 homotrimer is fusion active, and promotes release of viral nucleocapsid in cytoplasm after endosome and viral membrane fusion. The cytoplasmic tail of spike glycoprotein E1 modulates virus release. The surface glycoproteins display an irregular helical organization and a pseudo-tetrameric inner nucleocapsid arrangement. The polypeptide is Structural polyprotein (Rubella virus (strain RN-UK86) (RUBV)).